The sequence spans 204 residues: LexA repressor (204 aa).

Positions 31–51 (VREICAKVGLSSTSTVHGHLS) form a DNA-binding region, H-T-H motif. Catalysis depends on for autocatalytic cleavage activity residues Ser128 and Lys165.

Belongs to the peptidase S24 family. As to quaternary structure, homodimer.

The catalysed reaction is Hydrolysis of Ala-|-Gly bond in repressor LexA.. Represses a number of genes involved in the response to DNA damage (SOS response), including recA and lexA. In the presence of single-stranded DNA, RecA interacts with LexA causing an autocatalytic cleavage which disrupts the DNA-binding part of LexA, leading to derepression of the SOS regulon and eventually DNA repair. This Clostridium acetobutylicum (strain ATCC 824 / DSM 792 / JCM 1419 / IAM 19013 / LMG 5710 / NBRC 13948 / NRRL B-527 / VKM B-1787 / 2291 / W) protein is LexA repressor.